The following is a 1061-amino-acid chain: Lysine-specific demethylase jmjd-3.1 (1061 aa).

2 disordered regions span residues 30–49 (VKNS…MRPV) and 256–417 (KSLS…KRRT). Residues 271–287 (QHTNSVGSSIGTTSGDS) are compositionally biased toward polar residues. Residues 310–320 (STSSEFTETTS) show a composition bias toward low complexity. Residues 321–330 (VANQTESNAG) are compositionally biased toward polar residues. Residues 369-417 (KKKEQSATEPPIPRTKRAYTKNPNTIRKRRMKKNQSDDEEDDGPPKRRT) are required for nuclear localization. Residues 418 to 759 (INYQIEFRDA…FGTNIDLLSE (342 aa)) are required for binding of unc-3 and for function in Y-to-PDA transdifferentiation. The 164-residue stretch at 760 to 923 (NFKKQMNEIE…LATSIVAHDH (164 aa)) folds into the JmjC domain. Fe cation-binding residues include histidine 811, glutamate 813, and histidine 891. 4 residues coordinate Zn(2+): cysteine 998, cysteine 1001, cysteine 1025, and cysteine 1028.

This sequence belongs to the UTX family. In terms of assembly, interacts with wdr-5.1 and unc-3. Requires Fe(2+) as cofactor. In terms of tissue distribution, mainly expressed in head and tail.

It localises to the nucleus. Functionally, histone demethylase that specifically demethylates trimethylated 'Lys-27' of histone H3, a mark associated with transcriptional repression, thereby playing a central role in the histone code. Involved in the transcriptional regulation of the heat shock response, unfolded protein response and possibly other stress response target genes. Required for gonad development and organization. Required for the robust transdifferentiation of the Y rectal epithelial cell to the PDA motor neuron during larval development. Acts cell-autonomously in Y-to-PDA transdifferentiation, which depends on the demethylase activity and on recognition of the H3 tail. Cooperates with set-2 and unc-3 to ensure robust Y-to-PDA transdifferentiation. Promotes mitochondrial stress-induced longevity. Involved in lifespan regulation. The sequence is that of Lysine-specific demethylase jmjd-3.1 from Caenorhabditis elegans.